Reading from the N-terminus, the 204-residue chain is Pectinesterase inhibitor 9 (204 aa).

Residues 1–23 (MELKNTIFLVILLSITILQSSSA) form the signal peptide. N26 carries N-linked (GlcNAc...) asparagine glycosylation. 2 disulfide bridges follow: C38–C47 and C106–C157.

It belongs to the PMEI family. Binds reversibly to PME3 to inhibit its activity; the stability of the PME3-PMEI9 complex and the inhibition of the pectin methylesterase (PME) activity is pH-dependent, based on protonation status of amino-acids at the complex interface. Highly expressed in roots and etiolated hypocotyls. Expressed in seedlings, leaves, stems, siliques, floral buds and mature seeds.

It is found in the secreted. Its subcellular location is the extracellular space. The protein resides in the apoplast. Functionally, pectin methylesterase (PME) inhibitor that probably targets root-expressed PME and PME3 in a moderate pH-dependent manner, mainly in slightly acidic conditions (pH 6.3 and 5.0) and to some extent at pH 7.5; this processus relies on changes in the protonation of amino acids involved in intermolecular and intramolecular interactions. Regulates de-methylesterification of pectins in roots and affects root growth. The polypeptide is Pectinesterase inhibitor 9 (Arabidopsis thaliana (Mouse-ear cress)).